The chain runs to 477 residues: Phosphatidylinositol 4-kinase type 2-beta (477 aa).

Residues 1–80 (MPEPPRDIMA…EDRSISASLS (80 aa)) are disordered. At Ser45 the chain carries Phosphoserine. Residues 116 to 447 (GVFPERISQG…AQMPCVIVEC (332 aa)) form the PI3K/PI4K catalytic domain. The G-loop stretch occupies residues 122–128 (ISQGSSG). Residues Ser129 and Lys144 each contribute to the ATP site. The tract at residues 149 to 151 (EPY) is important for substrate binding. The tract at residues 157-170 (KWTKYVHKVCCPCC) is important for interaction with membranes. ATP contacts are provided by residues 253-256 (QLFV) and 267-268 (RR). Residues 260-268 (KEAEYWLRR) are important for interaction with membranes. The catalytic loop stretch occupies residues 297 to 305 (RNTDRGNDN). The interval 338 to 358 (AIDNGLAFPFKHPDEWRAYPF) is activation loop. Asp340 is an ATP binding site. The segment at 353-362 (WRAYPFHWAW) is important for interaction with membranes.

This sequence belongs to the PI3/PI4-kinase family. Type II PI4K subfamily.

It localises to the cytoplasm. The protein localises to the cytosol. It is found in the golgi apparatus membrane. Its subcellular location is the endoplasmic reticulum membrane. The protein resides in the cell membrane. It localises to the early endosome membrane. The enzyme catalyses a 1,2-diacyl-sn-glycero-3-phospho-(1D-myo-inositol) + ATP = a 1,2-diacyl-sn-glycero-3-phospho-(1D-myo-inositol 4-phosphate) + ADP + H(+). Together with PI4K2A and the type III PI4Ks (PIK4CA and PIK4CB) it contributes to the overall PI4-kinase activity of the cell. This contribution may be especially significant in plasma membrane, endosomal and Golgi compartments. The phosphorylation of phosphatidylinositol (PI) to PI4P is the first committed step in the generation of phosphatidylinositol 4,5-bisphosphate (PIP2), a precursor of the second messenger inositol 1,4,5-trisphosphate (InsP3). Contributes to the production of InsP3 in stimulated cells and is likely to be involved in the regulation of vesicular trafficking. The sequence is that of Phosphatidylinositol 4-kinase type 2-beta (Pi4k2b) from Rattus norvegicus (Rat).